We begin with the raw amino-acid sequence, 68 residues long: Small integral membrane protein 10-like protein 3 (68 aa).

This Homo sapiens (Human) protein is Small integral membrane protein 10-like protein 3.